The chain runs to 646 residues: Amyloid beta A4 precursor protein-binding family B member 1-interacting protein (646 aa).

The disordered stretch occupies residues 82–141 (FATERDTSKGSVPVAPAPSKPQSNFSLPASFDSSKPATSSNSIAAPPPPPAFKPSKEEEE). A compositionally biased stretch (polar residues) spans 101–116 (KPQSNFSLPASFDSSK). Residues 162-248 (KKLVVKVEIT…NKVLFQEKKH (87 aa)) enclose the Ras-associating domain. A PH domain is found at 292 to 401 (VPDLEGVLYL…WVTGIRVAKY (110 aa)). The tract at residues 420-646 (ASWANRTIQA…NAMQKKRTQP (227 aa)) is disordered. Residues 429-445 (ASSTASTPSPTPKAKAA) show a composition bias toward low complexity. Composition is skewed to pro residues over residues 465-500 (LPPP…PPVP), 509-536 (FPPP…PPPE), 560-577 (LPPP…PPPA), and 584-598 (APPP…PAPA).

It belongs to the MRL family.

Its subcellular location is the cell membrane. The protein localises to the cytoplasm. The protein resides in the cytoskeleton. Functionally, appears to function in the signal transduction from Ras activation to actin cytoskeletal remodeling. This Danio rerio (Zebrafish) protein is Amyloid beta A4 precursor protein-binding family B member 1-interacting protein (apbb1ip).